The sequence spans 215 residues: Thymidylate kinase (215 aa).

11 to 18 provides a ligand contact to ATP; it reads GIDGAGKS.

This sequence belongs to the thymidylate kinase family.

It carries out the reaction dTMP + ATP = dTDP + ADP. In terms of biological role, phosphorylation of dTMP to form dTDP in both de novo and salvage pathways of dTTP synthesis. This Nitrosomonas eutropha (strain DSM 101675 / C91 / Nm57) protein is Thymidylate kinase.